Reading from the N-terminus, the 1227-residue chain is JNK-interacting protein 3 (1227 aa).

The interval 1-22 is disordered; sequence MMDNDDALLNNGGPQSGAETVY. Positions 25–113 constitute an RH1 domain; that stretch reads EDNNMVMSEK…VTQYEREKSA (89 aa). A coiled-coil region spans residues 84-191; it reads RINQEQDVEV…TELFKNHVDY (108 aa). The segment at 281 to 323 is disordered; it reads DALQQQHHATSPQSPDSSPVVPNVPTNVGRSTTKKEQRSDNNL. Over residues 290–308 the composition is skewed to low complexity; sequence TSPQSPDSSPVVPNVPTNV. Positions 363-489 form a coiled coil; sequence GKEVENLIME…EAVRLTEILR (127 aa). Positions 453–524 constitute an RH2 domain; it reads RKRFTRVEMA…PSNRPTERVA (72 aa). Disordered regions lie at residues 517 to 572, 804 to 851, and 863 to 889; these read NRPT…HPAS, GKVE…AEEP, and PLPG…SSSN. A compositionally biased stretch (gly residues) spans 526 to 540; sequence GLGGGPMFRHTGGGS. The span at 541–550 shows a compositional bias: low complexity; sequence PAHSHGSPSR. A compositionally biased stretch (basic and acidic residues) spans 807–817; it reads EFVRVKPKSDD. Positions 814–849 form a coiled coil; it reads KSDDEQNSNEKQQQEEEEAKEATEKSNEQLPAVSAE. Positions 879 to 889 are enriched in low complexity; that stretch reads NNNNNSSSSSN.

This sequence belongs to the JIP scaffold family. As to quaternary structure, forms homo- and heterooligomeric complexes. Binds the TPR motif-containing C-terminal of kinesin light chain, Klc. Pre-assembled syd scaffolding complexes are then transported as a cargo of kinesin, to the required subcellular location.

The protein resides in the cytoplasm. The JNK-interacting protein (JIP) group of scaffold proteins selectively mediates JNK-signaling by aggregating specific components of the MAPK cascade to form a functional JNK signaling module. May function as a regulator of vesicle transport, through interactions with the JNK-signaling components and motor proteins. Syd is required for efficient kinesin-I mediated axonal transport. In Drosophila melanogaster (Fruit fly), this protein is JNK-interacting protein 3 (syd).